A 105-amino-acid polypeptide reads, in one-letter code: Large ribosomal subunit protein uL24 (105 aa).

The protein belongs to the universal ribosomal protein uL24 family. Part of the 50S ribosomal subunit.

Its function is as follows. One of two assembly initiator proteins, it binds directly to the 5'-end of the 23S rRNA, where it nucleates assembly of the 50S subunit. Functionally, one of the proteins that surrounds the polypeptide exit tunnel on the outside of the subunit. The sequence is that of Large ribosomal subunit protein uL24 from Aromatoleum aromaticum (strain DSM 19018 / LMG 30748 / EbN1) (Azoarcus sp. (strain EbN1)).